We begin with the raw amino-acid sequence, 152 residues long: Protein-export protein SecB (152 aa).

This sequence belongs to the SecB family. In terms of assembly, homotetramer, a dimer of dimers. One homotetramer interacts with 1 SecA dimer.

The protein localises to the cytoplasm. Functionally, one of the proteins required for the normal export of preproteins out of the cell cytoplasm. It is a molecular chaperone that binds to a subset of precursor proteins, maintaining them in a translocation-competent state. It also specifically binds to its receptor SecA. The protein is Protein-export protein SecB of Rickettsia felis (strain ATCC VR-1525 / URRWXCal2) (Rickettsia azadi).